The following is a 298-amino-acid chain: UDP-3-O-acyl-N-acetylglucosamine deacetylase (298 aa).

Zn(2+) is bound by residues histidine 80, histidine 239, and aspartate 243. Histidine 266 functions as the Proton donor in the catalytic mechanism.

The protein belongs to the LpxC family. Zn(2+) is required as a cofactor.

The catalysed reaction is a UDP-3-O-[(3R)-3-hydroxyacyl]-N-acetyl-alpha-D-glucosamine + H2O = a UDP-3-O-[(3R)-3-hydroxyacyl]-alpha-D-glucosamine + acetate. It functions in the pathway glycolipid biosynthesis; lipid IV(A) biosynthesis; lipid IV(A) from (3R)-3-hydroxytetradecanoyl-[acyl-carrier-protein] and UDP-N-acetyl-alpha-D-glucosamine: step 2/6. Its function is as follows. Catalyzes the hydrolysis of UDP-3-O-myristoyl-N-acetylglucosamine to form UDP-3-O-myristoylglucosamine and acetate, the committed step in lipid A biosynthesis. The protein is UDP-3-O-acyl-N-acetylglucosamine deacetylase of Blochmanniella floridana.